Reading from the N-terminus, the 256-residue chain is Protein FixA (256 aa).

Belongs to the ETF beta-subunit/FixA family. Heterodimer of FixA and FixB.

It functions in the pathway amine and polyamine metabolism; carnitine metabolism. Functionally, required for anaerobic carnitine reduction. May bring reductant to CaiA. The chain is Protein FixA from Salmonella dublin (strain CT_02021853).